Here is a 126-residue protein sequence, read N- to C-terminus: Small ribosomal subunit protein uS13 (126 aa).

The disordered stretch occupies residues 95 to 126 (GLPVRGQRTQTNARTRKGKKKTVAGKKKAGRK). Over residues 108 to 126 (RTRKGKKKTVAGKKKAGRK) the composition is skewed to basic residues.

The protein belongs to the universal ribosomal protein uS13 family. In terms of assembly, part of the 30S ribosomal subunit. Forms a loose heterodimer with protein S19. Forms two bridges to the 50S subunit in the 70S ribosome.

Its function is as follows. Located at the top of the head of the 30S subunit, it contacts several helices of the 16S rRNA. In the 70S ribosome it contacts the 23S rRNA (bridge B1a) and protein L5 of the 50S subunit (bridge B1b), connecting the 2 subunits; these bridges are implicated in subunit movement. Contacts the tRNAs in the A and P-sites. The chain is Small ribosomal subunit protein uS13 from Thermobifida fusca (strain YX).